The sequence spans 474 residues: Mitochondrial import inner membrane translocase subunit TIM44-1 (474 aa).

Residues 1–54 (MAIRKIIRDLLITKQPLLRQLFHQRVLRANARSEFLPAIGYTSHRRFSVFTEFS) constitute a mitochondrion transit peptide. Positions 68 to 88 (ERTVKELKERTEEFKGVTEDL) form a coiled coil. The segment covering 132–143 (VKESFKLGKEEN) has biased composition (basic and acidic residues). The disordered stretch occupies residues 132–165 (VKESFKLGKEENAESASSSGTRASQGEKQQSGST). Over residues 145 to 165 (ESASSSGTRASQGEKQQSGST) the composition is skewed to polar residues.

Belongs to the Tim44 family. As to quaternary structure, probable component of the PAM complex at least composed of a mitochondrial HSP70 protein, TIMM44 and TIMM14. The complex interacts with the TIMM23 component of the TIM17:23 complex. In terms of tissue distribution, expressed in roots, flowers, young cotyledons and leaves.

Its subcellular location is the mitochondrion inner membrane. In terms of biological role, essential component of the PAM complex, a complex required for the translocation of transit peptide-containing proteins from the inner membrane into the mitochondrial matrix in an ATP-dependent manner. Recruits mitochondrial HSP70 to drive protein translocation into the matrix using ATP as an energy source. This chain is Mitochondrial import inner membrane translocase subunit TIM44-1 (TIM44-1), found in Arabidopsis thaliana (Mouse-ear cress).